The chain runs to 368 residues: tRNA/tmRNA (uracil-C(5))-methyltransferase (368 aa).

Q190, Y218, N223, E239, and D301 together coordinate S-adenosyl-L-methionine. The active-site Nucleophile is C326. E360 serves as the catalytic Proton acceptor.

This sequence belongs to the class I-like SAM-binding methyltransferase superfamily. RNA M5U methyltransferase family. TrmA subfamily.

The catalysed reaction is uridine(54) in tRNA + S-adenosyl-L-methionine = 5-methyluridine(54) in tRNA + S-adenosyl-L-homocysteine + H(+). It carries out the reaction uridine(341) in tmRNA + S-adenosyl-L-methionine = 5-methyluridine(341) in tmRNA + S-adenosyl-L-homocysteine + H(+). In terms of biological role, dual-specificity methyltransferase that catalyzes the formation of 5-methyluridine at position 54 (m5U54) in all tRNAs, and that of position 341 (m5U341) in tmRNA (transfer-mRNA). This is tRNA/tmRNA (uracil-C(5))-methyltransferase from Photobacterium profundum (strain SS9).